Here is a 432-residue protein sequence, read N- to C-terminus: Adenylosuccinate synthetase (432 aa).

GTP contacts are provided by residues 13 to 19 (GDEGKGK) and 41 to 43 (GHT). Aspartate 14 acts as the Proton acceptor in catalysis. Positions 14 and 41 each coordinate Mg(2+). IMP is bound by residues 14-17 (DEGK), 39-42 (NAGH), threonine 130, arginine 144, glutamine 225, threonine 240, and arginine 304. Histidine 42 acts as the Proton donor in catalysis. 300-306 (ATTGRRR) lines the substrate pocket. GTP is bound by residues arginine 306, 332–334 (KLD), and 415–417 (STG).

It belongs to the adenylosuccinate synthetase family. In terms of assembly, homodimer. Requires Mg(2+) as cofactor.

The protein resides in the cytoplasm. It catalyses the reaction IMP + L-aspartate + GTP = N(6)-(1,2-dicarboxyethyl)-AMP + GDP + phosphate + 2 H(+). It participates in purine metabolism; AMP biosynthesis via de novo pathway; AMP from IMP: step 1/2. Plays an important role in the de novo pathway of purine nucleotide biosynthesis. Catalyzes the first committed step in the biosynthesis of AMP from IMP. The polypeptide is Adenylosuccinate synthetase (Salmonella paratyphi A (strain AKU_12601)).